Reading from the N-terminus, the 157-residue chain is 2-C-methyl-D-erythritol 2,4-cyclodiphosphate synthase (157 aa).

A divalent metal cation-binding residues include Asp-8 and His-10. Residues 8–10 (DVH) and 34–35 (HS) each bind 4-CDP-2-C-methyl-D-erythritol 2-phosphate. His-42 lines the a divalent metal cation pocket. 4-CDP-2-C-methyl-D-erythritol 2-phosphate-binding positions include 56 to 58 (DIG), 61 to 65 (FPDTD), 132 to 135 (TTEE), and Phe-139.

This sequence belongs to the IspF family. As to quaternary structure, homotrimer. A divalent metal cation serves as cofactor.

The enzyme catalyses 4-CDP-2-C-methyl-D-erythritol 2-phosphate = 2-C-methyl-D-erythritol 2,4-cyclic diphosphate + CMP. Its pathway is isoprenoid biosynthesis; isopentenyl diphosphate biosynthesis via DXP pathway; isopentenyl diphosphate from 1-deoxy-D-xylulose 5-phosphate: step 4/6. Functionally, involved in the biosynthesis of isopentenyl diphosphate (IPP) and dimethylallyl diphosphate (DMAPP), two major building blocks of isoprenoid compounds. Catalyzes the conversion of 4-diphosphocytidyl-2-C-methyl-D-erythritol 2-phosphate (CDP-ME2P) to 2-C-methyl-D-erythritol 2,4-cyclodiphosphate (ME-CPP) with a corresponding release of cytidine 5-monophosphate (CMP). The sequence is that of 2-C-methyl-D-erythritol 2,4-cyclodiphosphate synthase from Clostridium botulinum (strain Alaska E43 / Type E3).